Consider the following 172-residue polypeptide: Small ribosomal subunit protein uS5 (172 aa).

The S5 DRBM domain maps to 16–79 (LKDRLVAINR…ESAKKNLTRV (64 aa)).

It belongs to the universal ribosomal protein uS5 family. In terms of assembly, part of the 30S ribosomal subunit. Contacts proteins S4 and S8.

In terms of biological role, with S4 and S12 plays an important role in translational accuracy. Its function is as follows. Located at the back of the 30S subunit body where it stabilizes the conformation of the head with respect to the body. The polypeptide is Small ribosomal subunit protein uS5 (Bacteroides fragilis (strain ATCC 25285 / DSM 2151 / CCUG 4856 / JCM 11019 / LMG 10263 / NCTC 9343 / Onslow / VPI 2553 / EN-2)).